Here is a 172-residue protein sequence, read N- to C-terminus: MTNYMFILSLLFLTGCLGLALKPSPIYGGLGLIVSGCIGCLMVLGFGGSFLGLMVFLIYLGGMLVVFGYTTAMATEEYPETWGSNWFIFSFFVLGLFMELVVFYLFSLNNKVELVDFDSLGDWLMYEIDDVGVMLEGGIGVAAIYSCATWMMVVAGWSLFAGIFIIIEITRD.

5 helical membrane-spanning segments follow: residues Met1–Leu21, Ile26–Gly48, Gly52–Ala74, Trp86–Phe106, and Cys147–Ile167.

The protein belongs to the complex I subunit 6 family. Core subunit of respiratory chain NADH dehydrogenase (Complex I) which is composed of 45 different subunits.

The protein resides in the mitochondrion inner membrane. It carries out the reaction a ubiquinone + NADH + 5 H(+)(in) = a ubiquinol + NAD(+) + 4 H(+)(out). In terms of biological role, core subunit of the mitochondrial membrane respiratory chain NADH dehydrogenase (Complex I) which catalyzes electron transfer from NADH through the respiratory chain, using ubiquinone as an electron acceptor. Essential for the catalytic activity and assembly of complex I. The chain is NADH-ubiquinone oxidoreductase chain 6 from Rattus norvegicus (Rat).